We begin with the raw amino-acid sequence, 519 residues long: Probable cytochrome P450 513D1 (519 aa).

A helical transmembrane segment spans residues M1–K21. C464 contacts heme.

The protein belongs to the cytochrome P450 family. Heme serves as cofactor.

It is found in the membrane. In Dictyostelium discoideum (Social amoeba), this protein is Probable cytochrome P450 513D1 (cyp513D1).